The primary structure comprises 351 residues: Dihydroorotate dehydrogenase (quinone) (351 aa).

Residues 61-65 (AGLDK) and Thr85 contribute to the FMN site. Lys65 contributes to the substrate binding site. Residue 110–114 (NRMGF) participates in substrate binding. Residues Asn139 and Asn172 each coordinate FMN. Asn172 contacts substrate. Ser175 acts as the Nucleophile in catalysis. Position 177 (Asn177) interacts with substrate. FMN is bound by residues Lys217 and Thr245. 246–247 (NT) contacts substrate. FMN contacts are provided by residues Gly268, Gly297, and 318–319 (YT).

Belongs to the dihydroorotate dehydrogenase family. Type 2 subfamily. Monomer. It depends on FMN as a cofactor.

Its subcellular location is the cell membrane. It catalyses the reaction (S)-dihydroorotate + a quinone = orotate + a quinol. Its pathway is pyrimidine metabolism; UMP biosynthesis via de novo pathway; orotate from (S)-dihydroorotate (quinone route): step 1/1. Functionally, catalyzes the conversion of dihydroorotate to orotate with quinone as electron acceptor. The protein is Dihydroorotate dehydrogenase (quinone) of Xylella fastidiosa (strain M12).